We begin with the raw amino-acid sequence, 136 residues long: Large ribosomal subunit protein uL16 (136 aa).

It belongs to the universal ribosomal protein uL16 family. As to quaternary structure, part of the 50S ribosomal subunit.

Binds 23S rRNA and is also seen to make contacts with the A and possibly P site tRNAs. This Pseudoalteromonas atlantica (strain T6c / ATCC BAA-1087) protein is Large ribosomal subunit protein uL16.